Consider the following 830-residue polypeptide: Venom phosphodiesterase (830 aa).

SMB domains follow at residues 7–50 and 51–95; these read PLES…VLPT and QSWS…RETS. Disulfide bonds link cysteine 11–cysteine 15, cysteine 11–cysteine 28, cysteine 15–cysteine 46, cysteine 26–cysteine 28, cysteine 26–cysteine 39, cysteine 32–cysteine 38, cysteine 39–cysteine 46, cysteine 55–cysteine 60, cysteine 55–cysteine 72, cysteine 60–cysteine 90, cysteine 70–cysteine 72, cysteine 70–cysteine 83, cysteine 76–cysteine 82, cysteine 83–cysteine 90, cysteine 101–cysteine 147, and cysteine 109–cysteine 321. A glycan (N-linked (GlcNAc...) asparagine) is linked at asparagine 16. A Cell attachment site motif is present at residues 35–37; that stretch reads RKA. A divalent metal cation is bound by residues aspartate 124 and threonine 162. Threonine 162 serves as the catalytic AMP-threonine intermediate. N-linked (GlcNAc...) asparagine glycans are attached at residues asparagine 193, asparagine 236, and asparagine 247. Lysine 248 contributes to the AMP binding site. Residues aspartate 282, histidine 286, aspartate 329, and histidine 330 each contribute to the a divalent metal cation site. Histidine 286 contributes to the AMP binding site. 6 cysteine pairs are disulfide-bonded: cysteine 337-cysteine 434, cysteine 385-cysteine 772, cysteine 518-cysteine 575, cysteine 531-cysteine 632, cysteine 533-cysteine 617, and cysteine 740-cysteine 750. Histidine 439 lines the a divalent metal cation pocket. N-linked (GlcNAc...) asparagine glycosylation is present at asparagine 489. N-linked (GlcNAc...) asparagine glycosylation is found at asparagine 723 and asparagine 742.

This sequence belongs to the nucleotide pyrophosphatase/phosphodiesterase family. As to quaternary structure, monomer cleaved in two subunits; disulfide-linked. Is synthesized as a single-chain protein and is subsequently cleaved to form a two-subunit protein held together with disulfide bonds. A divalent metal cation serves as cofactor. In terms of tissue distribution, expressed by venom gland.

The protein resides in the secreted. It carries out the reaction ADP + H2O = AMP + phosphate + H(+). Hydrolyzes ADP with high activity. Shows weak or no activity on 5'-AMP, 5'-GMP, 3'-AMP, ATP, cAMP, and cGMP. Is devoid of monophosphatase and proteinase activities. Dose-dependently inhibits platelet aggregation induced by ADP and collagen. This Naja atra (Chinese cobra) protein is Venom phosphodiesterase.